Reading from the N-terminus, the 1224-residue chain is Coatomer subunit alpha (1224 aa).

WD repeat units lie at residues 3–38 (TKFE…LWDY), 42–80 (TLID…VWNY), 84–122 (RCLF…VWNW), and 126–164 (TCVC…VWDI). Ser173 is modified (phosphoserine). Residue Thr185 is modified to Phosphothreonine. 3 WD repeats span residues 195-234 (AVVK…IWRM), 241-278 (EVDT…VWDM), and 282-319 (TGVQ…VFKL). Ser402 bears the Phosphoserine mark. Phosphothreonine is present on Thr591. Position 895 is a phosphoserine (Ser895). Omega-N-methylarginine is present on Arg965. The residue at position 1193 (Ser1193) is a Phosphoserine.

Oligomeric complex that consists of at least the alpha, beta, beta', gamma, delta, epsilon and zeta subunits. Interacts with SCYL1. Interacts with JAGN1. Interacts with TMEM41B. Interacts with SVEP1. Probably interacts with PEX11A. In terms of tissue distribution, uniformly expressed in a wide range of adult and fetal tissues. Xenin is found in gastric, duodenal and jejunal mucosa. Circulates in the blood. Seems to be confined to specific endocrine cells.

It localises to the cytoplasm. Its subcellular location is the golgi apparatus membrane. The protein resides in the cytoplasmic vesicle. The protein localises to the COPI-coated vesicle membrane. It is found in the secreted. The coatomer is a cytosolic protein complex that binds to dilysine motifs and reversibly associates with Golgi non-clathrin-coated vesicles, which further mediate biosynthetic protein transport from the ER, via the Golgi up to the trans Golgi network. Coatomer complex is required for budding from Golgi membranes, and is essential for the retrograde Golgi-to-ER transport of dilysine-tagged proteins. In mammals, the coatomer can only be recruited by membranes associated to ADP-ribosylation factors (ARFs), which are small GTP-binding proteins; the complex also influences the Golgi structural integrity, as well as the processing, activity, and endocytic recycling of LDL receptors. In terms of biological role, xenin stimulates exocrine pancreatic secretion. It inhibits pentagastrin-stimulated secretion of acid, to induce exocrine pancreatic secretion and to affect small and large intestinal motility. In the gut, xenin interacts with the neurotensin receptor. This Homo sapiens (Human) protein is Coatomer subunit alpha (COPA).